Consider the following 316-residue polypeptide: Acetaldehyde dehydrogenase (316 aa).

Residue 11–14 (SGNI) coordinates NAD(+). The active-site Acyl-thioester intermediate is Cys131. NAD(+) contacts are provided by residues 162-170 (SAGPGTRAN) and Asn289.

The protein belongs to the acetaldehyde dehydrogenase family. In terms of assembly, interacts with MhpE.

It catalyses the reaction acetaldehyde + NAD(+) + CoA = acetyl-CoA + NADH + H(+). It participates in aromatic compound metabolism; 3-phenylpropanoate degradation. Catalyzes the conversion of acetaldehyde to acetyl-CoA, using NAD(+) and coenzyme A. Is the final enzyme in the meta-cleavage pathway for the degradation of aromatic compounds. This Escherichia coli O7:K1 (strain IAI39 / ExPEC) protein is Acetaldehyde dehydrogenase.